The chain runs to 61 residues: UPF0181 protein Ent638_2380 (61 aa).

The protein belongs to the UPF0181 family.

In Enterobacter sp. (strain 638), this protein is UPF0181 protein Ent638_2380.